A 377-amino-acid chain; its full sequence is Meiotic driver cw9 (377 aa).

Disordered stretches follow at residues 1–49 (MKNK…DLNN) and 64–100 (NKSTTPPDYDENRLPITDEGNNPPNTHRENHSSGTTD). Residues 11–29 (SMDEMSAKNDNEIDLEKGP) show a composition bias toward basic and acidic residues. 7 consecutive transmembrane segments (helical) span residues 105-125 (FLIKLLISFTSIILFNAPAVC), 142-162 (WTLFGFWCLVCTLALLFLTYF), 172-192 (VTIIFLAQCIKVTAVFLAQCV), 218-238 (VVIIWLLWVVICYTLFLRSKF), 252-272 (CSISAALLLFLLYVRLPFWTL), 276-296 (FSGLFQVLGVQSCVVIVTKGL), and 306-326 (ATGYEIEVSSLFVIGNFLFFY).

It belongs to the WTF family. As to quaternary structure, homomer. Forms protein aggregates. The two isoforms can interact with each other and with themselves. High sequence similarity is required for their interaction.

It localises to the spore membrane. The protein localises to the vacuole membrane. It is found in the ascus epiplasm. The protein resides in the cytoplasm. Its subcellular location is the endoplasmic reticulum membrane. Promotes unequal transmission of alleles from the parental zygote to progeny spores by acting as poison/antidote system where the poison and antidote proteins are produced from the same locus; the poison component is trans-acting and targets all spores within an ascus whereas the antidote component is spore-specific, leading to poisoning of all progeny that do not inherit the allele. Functionally, localizes isoform 2 to the vacuole thereby facilitating its degradation. Its function is as follows. Forms toxic aggregates that disrupt spore maturation. The polypeptide is Meiotic driver cw9 (Schizosaccharomyces pombe (Fission yeast)).